A 111-amino-acid polypeptide reads, in one-letter code: MICOS complex subunit MIC13 (111 aa).

The helical transmembrane segment at 8–26 (VVKFATKVTIAGGALYVAY) threads the bilayer.

It belongs to the MICOS complex subunit Mic13 family. Component of the mitochondrial contact site and cristae organizing system (MICOS) complex.

The protein localises to the mitochondrion inner membrane. Component of the MICOS complex, a large protein complex of the mitochondrial inner membrane that plays crucial roles in the maintenance of crista junctions, inner membrane architecture, and formation of contact sites to the outer membrane. Constituent of mature MICOS complex, it is required for the formation of cristae junction (CJ) and maintenance of cristae morphology. Required for the incorporation of MIC10 into the MICOS complex. This chain is MICOS complex subunit MIC13, found in Danio rerio (Zebrafish).